Reading from the N-terminus, the 697-residue chain is MANKREFPLAKTRNIGIMAHIDAGKTTTTERILYYTGKIHKIGETHEGDSQMDWMDEEKERGITITSAATTAQWKDYRINIIDTPGHVDFTIEVERSLRVLDGAVTVLDAQAGVEPQTENVWRQAETYGVPRIVFVNKMDKIGADFDKSVKSLHERLNANAQAVQMPIGSADTFEGVIDLINMVADIYDEDKLGSKWDTVPVPDEYKEEAEKRRAALIEAVADVDDNIMEKYLGGEEISNDELKAAIRKATLNLEFFPVYAGSAFKNKGVQMMLDGVIDYLPSPLDVKPYVAHDPKTGDEVELMADDKKPFAALAFKIATDPFVGRLTFIRVYTGSLESGSYVLNASKNSRERVGRLLQMHANSRTEIPEVFSGDIAGAIGLKNTTTGDSLTDPDHPLILESLQVPDPVIQVSVEPKSKADRDKMDVALQKLTEEDPTFRAETNPETGQTLISGMGELHLDIMVERMRREFNVEAKIGEPQVAYRETFTKEAKAQGKFVRQSGGKGQYGDVWIDFTPNEEGKGYEFEDAIVGGVVPREFIPSVDQGLQEAMKNGVLAGYPLIDVKAKLYDGSYHEVDSSEAAFKVAASLALRNAASKAGAVILEPIMKVQVTTPEEYLGDVMGSITARRGTMEGMEDRAGAKIINSFVPLSEMFGYATTLRSSTQGRGTFTMVFDHYSPTPKSIQADIIKKRGGDAE.

Residues 10-285 form the tr-type G domain; that stretch reads AKTRNIGIMA…GVIDYLPSPL (276 aa). Residues 19 to 26, 83 to 87, and 137 to 140 contribute to the GTP site; these read AHIDAGKT, DTPGH, and NKMD.

It belongs to the TRAFAC class translation factor GTPase superfamily. Classic translation factor GTPase family. EF-G/EF-2 subfamily.

Its subcellular location is the cytoplasm. Catalyzes the GTP-dependent ribosomal translocation step during translation elongation. During this step, the ribosome changes from the pre-translocational (PRE) to the post-translocational (POST) state as the newly formed A-site-bound peptidyl-tRNA and P-site-bound deacylated tRNA move to the P and E sites, respectively. Catalyzes the coordinated movement of the two tRNA molecules, the mRNA and conformational changes in the ribosome. The polypeptide is Elongation factor G (Lactobacillus acidophilus (strain ATCC 700396 / NCK56 / N2 / NCFM)).